The chain runs to 304 residues: Ornithine carbamoyltransferase (304 aa).

Carbamoyl phosphate contacts are provided by residues serine 53–threonine 56, glutamine 80, arginine 104, and histidine 131–glutamine 134. L-ornithine contacts are provided by residues asparagine 162, aspartate 219, and serine 223–methionine 224. Residues cysteine 259 to leucine 260 and arginine 287 contribute to the carbamoyl phosphate site.

Belongs to the aspartate/ornithine carbamoyltransferase superfamily. OTCase family.

It localises to the cytoplasm. The enzyme catalyses carbamoyl phosphate + L-ornithine = L-citrulline + phosphate + H(+). It functions in the pathway amino-acid biosynthesis; L-arginine biosynthesis; L-arginine from L-ornithine and carbamoyl phosphate: step 1/3. Reversibly catalyzes the transfer of the carbamoyl group from carbamoyl phosphate (CP) to the N(epsilon) atom of ornithine (ORN) to produce L-citrulline. The polypeptide is Ornithine carbamoyltransferase (Herminiimonas arsenicoxydans).